A 330-amino-acid chain; its full sequence is Molybdate/tungstate import ATP-binding protein WtpC (330 aa).

In terms of domain architecture, ABC transporter spans 3 to 232; the sequence is LMVEGISKDY…PASEEVAKFL (230 aa). 34–41 contacts ATP; it reads GPSGAGKT.

The protein belongs to the ABC transporter superfamily. Sulfate/tungstate importer (TC 3.A.1.6) family. In terms of assembly, the complex is composed of two ATP-binding proteins (WtpC), two transmembrane proteins (WtpB) and a solute-binding protein (WtpA).

It is found in the cell membrane. The enzyme catalyses tungstate(in) + ATP + H2O = tungstate(out) + ADP + phosphate + H(+). Its function is as follows. Part of the ABC transporter complex WtpABC involved in molybdate/tungstate import. Responsible for energy coupling to the transport system. This chain is Molybdate/tungstate import ATP-binding protein WtpC (wtpC), found in Thermococcus kodakarensis (strain ATCC BAA-918 / JCM 12380 / KOD1) (Pyrococcus kodakaraensis (strain KOD1)).